The chain runs to 406 residues: Protease ElaD (406 aa).

The active site involves His234. Catalysis depends on Cys316, which acts as the Nucleophile.

This sequence belongs to the peptidase C79 family.

Its function is as follows. Protease that can act as an efficient and specific deubiquitinating enzyme in vitro. Does not possess desumoylating and deneddylating activities. The physiological substrate is unknown. This is Protease ElaD (elaD) from Escherichia coli O139:H28 (strain E24377A / ETEC).